The chain runs to 162 residues: 2-C-methyl-D-erythritol 2,4-cyclodiphosphate synthase (162 aa).

Residues Asp9 and His11 each coordinate a divalent metal cation. 4-CDP-2-C-methyl-D-erythritol 2-phosphate is bound by residues 9–11 (DVH) and 37–38 (HS). His45 provides a ligand contact to a divalent metal cation.

It belongs to the IspF family. In terms of assembly, homotrimer. The cofactor is a divalent metal cation.

The enzyme catalyses 4-CDP-2-C-methyl-D-erythritol 2-phosphate = 2-C-methyl-D-erythritol 2,4-cyclic diphosphate + CMP. It participates in isoprenoid biosynthesis; isopentenyl diphosphate biosynthesis via DXP pathway; isopentenyl diphosphate from 1-deoxy-D-xylulose 5-phosphate: step 4/6. Its function is as follows. Involved in the biosynthesis of isopentenyl diphosphate (IPP) and dimethylallyl diphosphate (DMAPP), two major building blocks of isoprenoid compounds. Catalyzes the conversion of 4-diphosphocytidyl-2-C-methyl-D-erythritol 2-phosphate (CDP-ME2P) to 2-C-methyl-D-erythritol 2,4-cyclodiphosphate (ME-CPP) with a corresponding release of cytidine 5-monophosphate (CMP). The sequence is that of 2-C-methyl-D-erythritol 2,4-cyclodiphosphate synthase from Petrotoga mobilis (strain DSM 10674 / SJ95).